A 64-amino-acid polypeptide reads, in one-letter code: Metallothionein-A (64 aa).

The protein belongs to the metallothionein superfamily. Type 4 family.

Metallothioneins have a high content of cysteine residues that bind various heavy metals. This chain is Metallothionein-A (MTA), found in Strongylocentrotus purpuratus (Purple sea urchin).